The chain runs to 426 residues: Serine--tRNA ligase (426 aa).

233 to 235 (TAE) contributes to the L-serine binding site. Position 264–266 (264–266 (RSE)) interacts with ATP. L-serine is bound at residue E287. ATP is bound at residue 351-354 (EISS). An L-serine-binding site is contributed by S387.

It belongs to the class-II aminoacyl-tRNA synthetase family. Type-1 seryl-tRNA synthetase subfamily. In terms of assembly, homodimer. The tRNA molecule binds across the dimer.

It localises to the cytoplasm. It carries out the reaction tRNA(Ser) + L-serine + ATP = L-seryl-tRNA(Ser) + AMP + diphosphate + H(+). The catalysed reaction is tRNA(Sec) + L-serine + ATP = L-seryl-tRNA(Sec) + AMP + diphosphate + H(+). The protein operates within aminoacyl-tRNA biosynthesis; selenocysteinyl-tRNA(Sec) biosynthesis; L-seryl-tRNA(Sec) from L-serine and tRNA(Sec): step 1/1. Its function is as follows. Catalyzes the attachment of serine to tRNA(Ser). Is also able to aminoacylate tRNA(Sec) with serine, to form the misacylated tRNA L-seryl-tRNA(Sec), which will be further converted into selenocysteinyl-tRNA(Sec). This Ectopseudomonas mendocina (strain ymp) (Pseudomonas mendocina) protein is Serine--tRNA ligase.